A 216-amino-acid chain; its full sequence is Protein YabP (216 aa).

The polypeptide is Protein YabP (yabP) (Escherichia coli (strain K12)).